A 376-amino-acid chain; its full sequence is Actin, cytoplasmic (376 aa).

Belongs to the actin family.

Its subcellular location is the cytoplasm. The protein resides in the cytoskeleton. It carries out the reaction ATP + H2O = ADP + phosphate + H(+). Functionally, actins are highly conserved proteins that are involved in various types of cell motility and are ubiquitously expressed in all eukaryotic cells. The protein is Actin, cytoplasmic of Tetrahymena pyriformis.